Consider the following 140-residue polypeptide: MASSLITSAVIVVVLSLVLGSVEQVSGLRHVPKSPKTTDVKHPDFLVTIEPKPTILIPGVGRFLLPPKCKKPFYPYNPVTGAPLTGGGIPSYNGGQGAGPHTQLPGGDDTLVPNPGFEAPTPTIGAGTGSNGQVPPVPLP.

The first 21 residues, 1–21, serve as a signal peptide directing secretion; that stretch reads MASSLITSAVIVVVLSLVLGS. Residues 85-98 are compositionally biased toward gly residues; it reads TGGGIPSYNGGQGA. Residues 85–140 are disordered; it reads TGGGIPSYNGGQGAGPHTQLPGGDDTLVPNPGFEAPTPTIGAGTGSNGQVPPVPLP.

As to expression, inflorescence.

Its subcellular location is the secreted. The protein resides in the cell wall. The chain is Putative cell wall protein from Arabidopsis thaliana (Mouse-ear cress).